A 392-amino-acid chain; its full sequence is MNIHEYQAKEILRVCGVPTPAGFLVQEDTETSEIAKSLARLGGKVFAVKAQIHAGGRGKAGGVVICRSVEEAIDNTKKMLGMNLVTHQTSPAGQKVRKVYIEAGQSILKEYYLSMVVDRENAKVAIIASEEGGMDIEEIARSTPEKIKKVFVDLSIGISDFHARKIGFELGLSLAQIKQFTPLVKKLYALFVTRDASQVEINPLIANSKGEFIALDAKLNFDDNALYRHPDTLELRDLYEEDPKEIEAAKYNLNYIKMEGGIGCMVNGAGLAMATMDIIKYYGASPANFLDVGGGANLEQVTNAFKIISSDKHVAGILVNIFGGIMRCDIIAEGIVAAAKDIGLTMPLVVRLSGTNYSAGIKIIEGSGLNIVTASELDDAAQKIVKLTRKEI.

The region spanning 9–247 (KEILRVCGVP…LYEEDPKEIE (239 aa)) is the ATP-grasp domain. ATP is bound by residues Lys49, 56-58 (GRG), Glu102, Gln105, and Glu110. Mg(2+)-binding residues include Asn202 and Asp216. Residues Asn267 and 324-326 (GIM) each bind substrate.

It belongs to the succinate/malate CoA ligase beta subunit family. Heterotetramer of two alpha and two beta subunits. Mg(2+) is required as a cofactor.

The catalysed reaction is succinate + ATP + CoA = succinyl-CoA + ADP + phosphate. It catalyses the reaction GTP + succinate + CoA = succinyl-CoA + GDP + phosphate. It participates in carbohydrate metabolism; tricarboxylic acid cycle; succinate from succinyl-CoA (ligase route): step 1/1. In terms of biological role, succinyl-CoA synthetase functions in the citric acid cycle (TCA), coupling the hydrolysis of succinyl-CoA to the synthesis of either ATP or GTP and thus represents the only step of substrate-level phosphorylation in the TCA. The beta subunit provides nucleotide specificity of the enzyme and binds the substrate succinate, while the binding sites for coenzyme A and phosphate are found in the alpha subunit. The protein is Succinate--CoA ligase [ADP-forming] subunit beta of Neorickettsia sennetsu (strain ATCC VR-367 / Miyayama) (Ehrlichia sennetsu).